We begin with the raw amino-acid sequence, 544 residues long: Chaperonin GroEL (544 aa).

ATP is bound by residues 29–32 (TLGP), 86–90 (DGTTT), G413, 476–478 (NAA), and D492.

It belongs to the chaperonin (HSP60) family. As to quaternary structure, forms a cylinder of 14 subunits composed of two heptameric rings stacked back-to-back. Interacts with the co-chaperonin GroES.

It localises to the cytoplasm. It catalyses the reaction ATP + H2O + a folded polypeptide = ADP + phosphate + an unfolded polypeptide.. In terms of biological role, together with its co-chaperonin GroES, plays an essential role in assisting protein folding. The GroEL-GroES system forms a nano-cage that allows encapsulation of the non-native substrate proteins and provides a physical environment optimized to promote and accelerate protein folding. This Bacillus cereus (strain G9842) protein is Chaperonin GroEL.